Here is a 102-residue protein sequence, read N- to C-terminus: Small ribosomal subunit protein uS10 (102 aa).

It belongs to the universal ribosomal protein uS10 family. As to quaternary structure, part of the 30S ribosomal subunit.

Functionally, involved in the binding of tRNA to the ribosomes. The protein is Small ribosomal subunit protein uS10 of Micrococcus luteus (strain ATCC 4698 / DSM 20030 / JCM 1464 / CCM 169 / CCUG 5858 / IAM 1056 / NBRC 3333 / NCIMB 9278 / NCTC 2665 / VKM Ac-2230) (Micrococcus lysodeikticus).